We begin with the raw amino-acid sequence, 908 residues long: PTS system glucose-specific EIICBA component (908 aa).

The PTS EIIC type-1; first part domain occupies 1 to 264 (MQISLVKIRN…YAPLWYTSAG (264 aa)). 5 consecutive transmembrane segments (helical) span residues 31–51 (LMIPIAVLPLAGIFLGIGDAI), 71–91 (GGNVVFANLPILFAVAIAITF), 100–120 (FSAFVFWATMNAFMSSLIIPV), 155–175 (VFGGIIVGALTAYLYNKFYAI), and 189–209 (FVPIICMTIAIPVALLLLMVW). The unknown stretch occupies residues 265–450 (GSLQEIANQQ…VSQFTVAVPS (186 aa)). Residues 451–602 (LNPAQYSQGK…FNLATPGRGG (152 aa)) enclose the PTS EIIC type-1; second part domain. The next 5 membrane-spanning stretches (helical) occupy residues 459–479 (GKFPFMLIGIPAAGLAMILAA), 487–507 (ASSIIGSAAFTSFLTGITEPF), 509–529 (FTFLFLAPWLFYGIHAVLAAV), 536–556 (LLSANVGQTFSGSFIDFILYG), and 571–591 (VPIIGIFLALIYFPTFYFLTI). The PTS EIIB type-1 domain maps to 631 to 713 (QIEAGMLLRA…QDIIQGKVNW (83 aa)). C653 acts as the Phosphocysteine intermediate; for EIIB activity in catalysis. Residues 762-875 (DDTFKNRLVG…DPITPFIVMQ (114 aa)) form the PTS EIIA type-1 domain. H815 acts as the Tele-phosphohistidine intermediate; for EIIA activity in catalysis.

The protein localises to the cell membrane. The catalysed reaction is N(pros)-phospho-L-histidyl-[protein] + D-glucose(out) = D-glucose 6-phosphate(in) + L-histidyl-[protein]. Its function is as follows. The phosphoenolpyruvate-dependent sugar phosphotransferase system (sugar PTS), a major carbohydrate active transport system, catalyzes the phosphorylation of incoming sugar substrates concomitantly with their translocation across the cell membrane. This system is involved in glucose transport. The protein is PTS system glucose-specific EIICBA component (ptsG) of Mycoplasma genitalium (strain ATCC 33530 / DSM 19775 / NCTC 10195 / G37) (Mycoplasmoides genitalium).